The chain runs to 217 residues: Thymidylate kinase (217 aa).

Residue 12–19 (GIDGSGKS) participates in ATP binding.

The protein belongs to the thymidylate kinase family.

It catalyses the reaction dTMP + ATP = dTDP + ADP. Functionally, phosphorylation of dTMP to form dTDP in both de novo and salvage pathways of dTTP synthesis. The chain is Thymidylate kinase from Cereibacter sphaeroides (strain ATCC 17023 / DSM 158 / JCM 6121 / CCUG 31486 / LMG 2827 / NBRC 12203 / NCIMB 8253 / ATH 2.4.1.) (Rhodobacter sphaeroides).